A 122-amino-acid polypeptide reads, in one-letter code: Large ribosomal subunit protein uL14 (122 aa).

Belongs to the universal ribosomal protein uL14 family. In terms of assembly, part of the 50S ribosomal subunit. Forms a cluster with proteins L3 and L19. In the 70S ribosome, L14 and L19 interact and together make contacts with the 16S rRNA in bridges B5 and B8.

Functionally, binds to 23S rRNA. Forms part of two intersubunit bridges in the 70S ribosome. The polypeptide is Large ribosomal subunit protein uL14 (Mesomycoplasma hyopneumoniae (strain 232) (Mycoplasma hyopneumoniae)).